Reading from the N-terminus, the 228-residue chain is uncharacterized protein (228 aa).

Positions 179, 199, and 208 each coordinate S-adenosyl-L-methionine.

This sequence belongs to the class IV-like SAM-binding methyltransferase superfamily. RNA methyltransferase TrmH family.

This is an uncharacterized protein from Borreliella burgdorferi (strain ATCC 35210 / DSM 4680 / CIP 102532 / B31) (Borrelia burgdorferi).